The chain runs to 775 residues: Chondroitin sulfate synthase 2 (775 aa).

Residues 1–15 (MRASLLLSVLRPAGP) are Cytoplasmic-facing. Residues 16-34 (VAVGISLGFTLSLLSVTWV) traverse the membrane as a helical; Signal-anchor for type II membrane protein segment. At 35–775 (EEPCGPGPPQ…LFEQEQGNST (741 aa)) the chain is on the lumenal side. Residues 37–100 (PCGPGPPQPG…YHPAQPGQAA (64 aa)) are disordered. The segment covering 54 to 66 (GNTNAARRPNSVQ) has biased composition (polar residues). 2 N-linked (GlcNAc...) asparagine glycosylation sites follow: asparagine 138 and asparagine 361. Aspartate 617 lines the a divalent metal cation pocket.

Belongs to the chondroitin N-acetylgalactosaminyltransferase family. In terms of assembly, interacts with PRKN. Requires Mn(2+) as cofactor. It depends on Co(2+) as a cofactor. Ubiquitous. Highly expressed in pancreas, ovary, brain, heart, skeletal muscle, colon, kidney, liver, stomach, spleen and placenta. As to expression, expressed in brain, spleen, ovary, testis, lung and peripheral mononuclear cells. In terms of tissue distribution, also ubiquitous.

The protein localises to the golgi apparatus. The protein resides in the golgi stack membrane. It is found in the cytoplasm. It localises to the cytosol. Its subcellular location is the mitochondrion. The protein localises to the mitochondrion matrix. It catalyses the reaction 3-O-(beta-D-GlcA-(1-&gt;3)-beta-D-GalNAc-(1-&gt;4)-beta-D-GlcA-(1-&gt;3)-beta-D-Gal-(1-&gt;3)-beta-D-Gal-(1-&gt;4)-beta-D-Xyl)-L-seryl-[protein] + UDP-N-acetyl-alpha-D-galactosamine = 3-O-(beta-D-GalNAc-(1-&gt;4)-beta-D-GlcA-(1-&gt;3)-beta-D-GalNAc-(1-&gt;4)-beta-D-GlcA-(1-&gt;3)-beta-D-Gal-(1-&gt;3)-beta-D-Gal-(1-&gt;4)-beta-D-Xyl)-L-seryl-[protein] + UDP + H(+). It carries out the reaction 3-O-{beta-D-GlcA-(1-&gt;3)-[beta-D-GalNAc-(1-&gt;4)-beta-D-GlcA-(1-&gt;3)](n)-beta-D-GalNAc-(1-&gt;4)-beta-D-GlcA-(1-&gt;3)-beta-D-Gal-(1-&gt;3)-beta-D-Gal-(1-&gt;4)-beta-D-Xyl}-L-seryl-[protein] + UDP-N-acetyl-alpha-D-galactosamine = 3-O-{[beta-D-GalNAc-(1-&gt;4)-beta-D-GlcA-(1-&gt;3)](n+1)-beta-D-GalNAc-(1-&gt;4)-beta-D-GlcA-(1-&gt;3)-beta-D-Gal-(1-&gt;3)-beta-D-Gal-(1-&gt;4)-beta-D-Xyl}-L-seryl-[protein] + UDP + H(+). The catalysed reaction is 3-O-(beta-D-GalNAc-(1-&gt;4)-beta-D-GlcA-(1-&gt;3)-beta-D-Gal-(1-&gt;3)-beta-D-Gal-(1-&gt;4)-beta-D-Xyl)-L-seryl-[protein] + UDP-alpha-D-glucuronate = 3-O-(beta-D-GlcA-(1-&gt;3)-beta-D-GalNAc-(1-&gt;4)-beta-D-GlcA-(1-&gt;3)-beta-D-Gal-(1-&gt;3)-beta-D-Gal-(1-&gt;4)-beta-D-Xyl)-L-seryl-[protein] + UDP + H(+). The enzyme catalyses 3-O-{[beta-D-GalNAc-(1-&gt;4)-beta-D-GlcA-(1-&gt;3)](n)-beta-D-GalNAc-(1-&gt;4)-beta-D-GlcA-(1-&gt;3)-beta-D-Gal-(1-&gt;3)-beta-D-Gal-(1-&gt;4)-beta-D-Xyl}-L-seryl-[protein] + UDP-alpha-D-glucuronate = 3-O-{beta-D-GlcA-(1-&gt;3)-[beta-D-GalNAc-(1-&gt;4)-beta-D-GlcA-(1-&gt;3)](n)-beta-D-GalNAc-(1-&gt;4)-beta-D-GlcA-(1-&gt;3)-beta-D-Gal-(1-&gt;3)-beta-D-Gal-(1-&gt;4)-beta-D-Xyl}-L-seryl-[protein] + UDP + H(+). In terms of biological role, has both beta-1,3-glucuronic acid and beta-1,4-N-acetylgalactosamine transferase activity. Transfers glucuronic acid (GlcUA) from UDP-GlcUA and N-acetylgalactosamine (GalNAc) from UDP-GalNAc to the non-reducing end of the elongating chondroitin polymer. Seems to act as a specific activating factor for CHSY1 in chondroitin polymerization. May facilitate PRKN transport into the mitochondria. In collaboration with PRKN, may enhance cell viability and protect cells from oxidative stress. In Homo sapiens (Human), this protein is Chondroitin sulfate synthase 2.